Here is a 319-residue protein sequence, read N- to C-terminus: Acetyl-coenzyme A carboxylase carboxyl transferase subunit alpha (319 aa).

Residues 32 to 293 (NVETEVRALR…KAVLLNELDA (262 aa)) enclose the CoA carboxyltransferase C-terminal domain.

It belongs to the AccA family. As to quaternary structure, acetyl-CoA carboxylase is a heterohexamer composed of biotin carboxyl carrier protein (AccB), biotin carboxylase (AccC) and two subunits each of ACCase subunit alpha (AccA) and ACCase subunit beta (AccD).

It is found in the cytoplasm. It catalyses the reaction N(6)-carboxybiotinyl-L-lysyl-[protein] + acetyl-CoA = N(6)-biotinyl-L-lysyl-[protein] + malonyl-CoA. The protein operates within lipid metabolism; malonyl-CoA biosynthesis; malonyl-CoA from acetyl-CoA: step 1/1. Component of the acetyl coenzyme A carboxylase (ACC) complex. First, biotin carboxylase catalyzes the carboxylation of biotin on its carrier protein (BCCP) and then the CO(2) group is transferred by the carboxyltransferase to acetyl-CoA to form malonyl-CoA. In Xanthomonas axonopodis pv. citri (strain 306), this protein is Acetyl-coenzyme A carboxylase carboxyl transferase subunit alpha.